Consider the following 207-residue polypeptide: Glycerol-3-phosphate acyltransferase (207 aa).

The next 6 helical transmembrane spans lie at 8-28 (NIVF…LILA), 64-84 (LGIA…LVGI), 92-112 (TLWA…YLGL), 122-142 (LGVY…VWIV), 154-174 (SLLG…GLGI), and 176-196 (SNIP…PNIV).

It belongs to the PlsY family. As to quaternary structure, probably interacts with PlsX.

It localises to the cell inner membrane. The enzyme catalyses an acyl phosphate + sn-glycerol 3-phosphate = a 1-acyl-sn-glycero-3-phosphate + phosphate. Its pathway is lipid metabolism; phospholipid metabolism. In terms of biological role, catalyzes the transfer of an acyl group from acyl-phosphate (acyl-PO(4)) to glycerol-3-phosphate (G3P) to form lysophosphatidic acid (LPA). This enzyme utilizes acyl-phosphate as fatty acyl donor, but not acyl-CoA or acyl-ACP. The chain is Glycerol-3-phosphate acyltransferase from Aliarcobacter butzleri (strain RM4018) (Arcobacter butzleri).